A 477-amino-acid polypeptide reads, in one-letter code: 3-sulfolactaldehyde dehydrogenase (477 aa).

232-233 (GS) serves as a coordination point for NAD(+). The active-site Proton acceptor is the glutamate 252. An NAD(+)-binding site is contributed by leucine 253. Catalysis depends on cysteine 286, which acts as the Nucleophile. Residue glutamate 380 participates in NAD(+) binding.

This sequence belongs to the aldehyde dehydrogenase family.

The enzyme catalyses (2S)-3-sulfolactaldehyde + NAD(+) + H2O = (2S)-3-sulfolactate + NADH + 2 H(+). Functionally, part of the sulfo-TAL (or sulfo-SFT) pathway, a D-sulfoquinovose degradation pathway that produces sulfolactate (SL). Catalyzes the oxidation of 3-sulfolactaldehyde (SLA) to sulfolactate (SL). The sequence is that of 3-sulfolactaldehyde dehydrogenase from Priestia aryabhattai (Bacillus aryabhattai).